The primary structure comprises 365 residues: N5-carboxyaminoimidazole ribonucleotide synthase (365 aa).

Residues Arg93, Lys132, 137-143, 168-171, Glu176, His199, and 249-250 contribute to the ATP site; these read GYDGKGQ, EEFV, and NE. The ATP-grasp domain maps to 97–279; the sequence is KLFLKKHGFP…QFENLLRAIT (183 aa).

The protein belongs to the PurK/PurT family. In terms of assembly, homodimer.

It catalyses the reaction 5-amino-1-(5-phospho-beta-D-ribosyl)imidazole + hydrogencarbonate + ATP = 5-carboxyamino-1-(5-phospho-D-ribosyl)imidazole + ADP + phosphate + 2 H(+). It functions in the pathway purine metabolism; IMP biosynthesis via de novo pathway; 5-amino-1-(5-phospho-D-ribosyl)imidazole-4-carboxylate from 5-amino-1-(5-phospho-D-ribosyl)imidazole (N5-CAIR route): step 1/2. Catalyzes the ATP-dependent conversion of 5-aminoimidazole ribonucleotide (AIR) and HCO(3)(-) to N5-carboxyaminoimidazole ribonucleotide (N5-CAIR). This chain is N5-carboxyaminoimidazole ribonucleotide synthase, found in Aquifex aeolicus (strain VF5).